The sequence spans 463 residues: Glucagon-like peptide 1 receptor (463 aa).

Positions 1–21 (MASTPSLLRLALLLLGAVGRA) are cleaved as a signal peptide. Over 22-139 (GPRPQGTTVS…KRGERNFPEE (118 aa)) the chain is Extracellular. Cystine bridges form between C46–C71, C62–C104, and C85–C126. N-linked (GlcNAc...) asparagine glycosylation is found at N63, N82, and N115. Residues 140–164 (QLLSLYIIYTVGYALSFSALVIASA) form a helical membrane-spanning segment. Over 165–175 (ILVGFRHLHCT) the chain is Cytoplasmic. The helical transmembrane segment at 176-201 (RNYIHLNLFASFILRALSVFIKDAAL) threads the bilayer. Residues 202–227 (KWMYSTAAQQHQWDGLLSYQDSLGCR) are Extracellular-facing. Residues C226 and C296 are joined by a disulfide bond. The helical transmembrane segment at 228–251 (LVFLLMQYCVAANYYWLLVEGVYL) threads the bilayer. Residues 252 to 265 (YTLLAFSVFSEQRI) are Cytoplasmic-facing. A helical membrane pass occupies residues 266–290 (FKLYLSIGWGVPLLFVIPWGIVKYL). Topologically, residues 291–305 (YEDEGCWTRNSNMNY) are extracellular. Residues 306–328 (WLIIRLPILFAIGVNFLIFIRVI) form a helical membrane-spanning segment. Over 329 to 348 (CIVVSKLKANLMCKTDIKCR) the chain is Cytoplasmic. C341 bears the ADP-ribosylcysteine mark. Position 348 is an ADP-ribosylarginine (R348). Residues 349–370 (LAKSTLTLIPLLGTHEVIFAFV) form a helical membrane-spanning segment. The segment at 352–355 (STLT) is important for allosteric inhibitor binding. Residues 371-383 (MDEHARGTLRFIK) are Extracellular-facing. The helical transmembrane segment at 384 to 404 (LFTELSFTSFQGLMVAILYCF) threads the bilayer. Residues 405–463 (VNNEVQMEFRKCWERWRLEHLNIQRDCSMKPLKCPTSSVSSGATVGSSVYAATCQSSYS) are Cytoplasmic-facing.

Belongs to the G-protein coupled receptor 2 family. May form homodimers and heterodimers with GIPR. In terms of processing, N-glycosylation enhances cell surface expression and lengthens receptor half-life by preventing degradation in the ER. As to expression, detected in pancreatic islets (at protein level). Detected in pancreatic islets and lungs.

The protein localises to the cell membrane. Functionally, G-protein coupled receptor for glucagon-like peptide 1 (GLP-1). Ligand binding triggers activation of a signaling cascade that leads to the activation of adenylyl cyclase and increased intracellular cAMP levels. Plays a role in regulating insulin secretion in response to GLP-1. The protein is Glucagon-like peptide 1 receptor (Glp1r) of Mus musculus (Mouse).